The primary structure comprises 403 residues: Ribosomal RNA large subunit methyltransferase I (403 aa).

The PUA domain occupies 9-88 (YPRLVLSKGR…ESIDIAFFTR (80 aa)).

This sequence belongs to the methyltransferase superfamily. RlmI family.

It localises to the cytoplasm. It carries out the reaction cytidine(1962) in 23S rRNA + S-adenosyl-L-methionine = 5-methylcytidine(1962) in 23S rRNA + S-adenosyl-L-homocysteine + H(+). Specifically methylates the cytosine at position 1962 (m5C1962) of 23S rRNA. The polypeptide is Ribosomal RNA large subunit methyltransferase I (Salmonella paratyphi A (strain ATCC 9150 / SARB42)).